The sequence spans 275 residues: uncharacterized protein (275 aa).

Residues 171-268 (KMVCEFLEEH…GLTPKQYMKI (98 aa)) form the HTH araC/xylS-type domain. 2 DNA-binding regions (H-T-H motif) span residues 188–209 (NDLS…TKQK) and 235–258 (PIDA…KRQV).

This is an uncharacterized protein from Bacillus subtilis (strain 168).